Here is a 1756-residue protein sequence, read N- to C-terminus: Periplakin (1756 aa).

S14 carries the post-translational modification Phosphoserine. Coiled coils occupy residues 16–125 (TVQT…KQIY) and 188–389 (KEQN…QQVV). 4 Spectrin repeats span residues 216 to 317 (QDYM…SHLK), 323 to 485 (HQFH…RTLQ), 505 to 612 (RQLL…EKVD), and 733 to 861 (EHFH…QNLE). The SH3 domain maps to 399 to 455 (LKPIPVEALCDFEGEQGLISRGYSYTLQKNNGESWELMDSAGNKLIAPAVCFVIPPT). A Phosphoserine modification is found at S465. Coiled-coil stretches lie at residues 585 to 820 (LLRT…GRRS) and 886 to 1645 (DSGV…SVAV). Phosphoserine is present on residues S887, S949, S1584, and S1657. The interval 1557-1756 (ELDFLREENH…ELAVLVSGQK (200 aa)) is interacts with BFSP2 and VIM. 2 Plectin repeats span residues 1651 to 1685 (ENHL…WNMF) and 1700 to 1735 (VKGP…PAQY).

Belongs to the plakin or cytolinker family. As to quaternary structure, homodimer or a heterodimer with EVPL. Found in a complex composed of PPL (via C-terminal linker domain), BFSP1 and BFSP2 in the retinal lens. Within the complex interacts (via C-terminal linker domain) with BFSP2. Interacts with VIM. Binds to the PH domain of AKT1. Interacts with FCGR1A. May interact with PPHLN1. As to expression, expressed in stratified squamous epithelia and in some other epithelia.

Its subcellular location is the cell junction. It localises to the desmosome. The protein resides in the cytoplasm. It is found in the cytoskeleton. The protein localises to the cell membrane. Functionally, component of the cornified envelope of keratinocytes. May link the cornified envelope to desmosomes and intermediate filaments. May act as a localization signal in PKB/AKT-mediated signaling. The polypeptide is Periplakin (PPL) (Homo sapiens (Human)).